Reading from the N-terminus, the 381-residue chain is Cytochrome b (381 aa).

4 consecutive transmembrane segments (helical) span residues 33-53, 77-98, 113-133, and 178-198; these read FGSLLGICLVIQILTGLFLAM, WLIRNLHANGASMFFMCLFLHV, WNIGVMLLLTVTATAFVGYVL, and FFALHFLLPFVIAGLTLVHLT. Residues histidine 83 and histidine 97 each coordinate heme b. Heme b-binding residues include histidine 182 and histidine 196. Position 201 (histidine 201) interacts with a ubiquinone. Helical transmembrane passes span 226-246, 288-308, 320-340, and 347-367; these read IKDILGLMFLLLVLLSLALFS, LGGVLALLASILILLVIPFLH, ISQTLFWILTANLITLTWIGG, and FIIIGQPASILYFPLIHHPMP.

This sequence belongs to the cytochrome b family. The cytochrome bc1 complex contains 11 subunits: 3 respiratory subunits (MT-CYB, CYC1 and UQCRFS1), 2 core proteins (UQCRC1 and UQCRC2) and 6 low-molecular weight proteins (UQCRH/QCR6, UQCRB/QCR7, UQCRQ/QCR8, UQCR10/QCR9, UQCR11/QCR10 and a cleavage product of UQCRFS1). This cytochrome bc1 complex then forms a dimer. Heme b serves as cofactor.

It is found in the mitochondrion inner membrane. In terms of biological role, component of the ubiquinol-cytochrome c reductase complex (complex III or cytochrome b-c1 complex) that is part of the mitochondrial respiratory chain. The b-c1 complex mediates electron transfer from ubiquinol to cytochrome c. Contributes to the generation of a proton gradient across the mitochondrial membrane that is then used for ATP synthesis. This is Cytochrome b (MT-CYB) from Sminthopsis youngsoni (Lesser hairy-footed dunnart).